Reading from the N-terminus, the 535-residue chain is Probable bifunctional tRNA threonylcarbamoyladenosine biosynthesis protein (535 aa).

A kae1 region spans residues 1-323; that stretch reads MICLGLEGTA…YRTDMVEVNW (323 aa). Fe cation contacts are provided by His-106, His-110, and Tyr-127. L-threonylcarbamoyladenylate-binding positions include 127-131, Asp-159, Gly-172, Glu-176, and Asn-256; that span reads YVSGG. Fe cation is bound at residue Asp-284. In terms of domain architecture, Protein kinase spans 333 to 535; sequence KIPEHLIGKG…DVERRARYVE (203 aa). ATP contacts are provided by residues 339–347 and Lys-360; that span reads IGKGAEADI. Asp-451 (proton acceptor; for kinase activity) is an active-site residue.

This sequence in the N-terminal section; belongs to the KAE1 / TsaD family. The protein in the C-terminal section; belongs to the protein kinase superfamily. Tyr protein kinase family. BUD32 subfamily. Component of the KEOPS complex that consists of Kae1, Bud32, Cgi121 and Pcc1; the whole complex dimerizes. It depends on Fe(2+) as a cofactor.

The protein resides in the cytoplasm. The enzyme catalyses L-seryl-[protein] + ATP = O-phospho-L-seryl-[protein] + ADP + H(+). It catalyses the reaction L-threonyl-[protein] + ATP = O-phospho-L-threonyl-[protein] + ADP + H(+). It carries out the reaction L-threonylcarbamoyladenylate + adenosine(37) in tRNA = N(6)-L-threonylcarbamoyladenosine(37) in tRNA + AMP + H(+). With respect to regulation, activity provided by the Kae1 region seems to be regulated via phosphorylation by the protein kinase Bud32, which is itself activated by Cgi121. Its function is as follows. Required for the formation of a threonylcarbamoyl group on adenosine at position 37 (t(6)A37) in tRNAs that read codons beginning with adenine. Is a component of the KEOPS complex that is probably involved in the transfer of the threonylcarbamoyl moiety of threonylcarbamoyl-AMP (TC-AMP) to the N6 group of A37. The Kae1 domain likely plays a direct catalytic role in this reaction. The Bud32 domain probably displays kinase activity that regulates Kae1 function. In vitro, exhibits low ATPase activity, but does not bind DNA and does not have endonuclease activity. This chain is Probable bifunctional tRNA threonylcarbamoyladenosine biosynthesis protein, found in Methanocaldococcus jannaschii (strain ATCC 43067 / DSM 2661 / JAL-1 / JCM 10045 / NBRC 100440) (Methanococcus jannaschii).